Consider the following 249-residue polypeptide: Hydroxyacylglutathione hydrolase (249 aa).

Zn(2+) is bound by residues H53, H55, D57, H58, H110, D127, and H165.

It belongs to the metallo-beta-lactamase superfamily. Glyoxalase II family. Monomer. The cofactor is Zn(2+).

It catalyses the reaction an S-(2-hydroxyacyl)glutathione + H2O = a 2-hydroxy carboxylate + glutathione + H(+). It functions in the pathway secondary metabolite metabolism; methylglyoxal degradation; (R)-lactate from methylglyoxal: step 2/2. Functionally, thiolesterase that catalyzes the hydrolysis of S-D-lactoyl-glutathione to form glutathione and D-lactic acid. This chain is Hydroxyacylglutathione hydrolase, found in Hamiltonella defensa subsp. Acyrthosiphon pisum (strain 5AT).